Reading from the N-terminus, the 235-residue chain is Small ribosomal subunit protein uS3 (235 aa).

In terms of domain architecture, KH type-2 spans 39-107; sequence IRTYIENELK…ETHLNIVEVR (69 aa). The segment at 215–235 is disordered; sequence SERRAVEGAGDGGGQRRRENA.

Belongs to the universal ribosomal protein uS3 family. Part of the 30S ribosomal subunit. Forms a tight complex with proteins S10 and S14.

In terms of biological role, binds the lower part of the 30S subunit head. Binds mRNA in the 70S ribosome, positioning it for translation. This Chelativorans sp. (strain BNC1) protein is Small ribosomal subunit protein uS3.